Reading from the N-terminus, the 511-residue chain is GATA zinc finger domain-containing protein 15 (511 aa).

A compositionally biased stretch (low complexity) spans 1 to 111 (TNNNNFNNIN…FNDNCNNNSN (111 aa)). 3 disordered regions span residues 1 to 194 (TNNN…NTFF), 214 to 313 (NVNN…NENK), and 325 to 355 (NLQYSPPPFQLDSGSTTPKTPSAPTSPVLSP). Positions 124–135 (SLQNINQYPLSP) are enriched in polar residues. A compositionally biased stretch (low complexity) spans 136–166 (NNNKSSNQHLSHSSSNVNSQYYQTPYYQPSQ). Positions 167-185 (KQNSPNSTPPLNGCQYENH) are enriched in polar residues. 2 stretches are compositionally biased toward low complexity: residues 214–309 (NVNN…NNDN) and 337–351 (SGSTTPKTPSAPTSP). The segment at 453–478 (CQACGTRASPEWRKGPDGFKSLCNAC) adopts a GATA-type zinc-finger fold.

This is GATA zinc finger domain-containing protein 15 (gtaO) from Dictyostelium discoideum (Social amoeba).